We begin with the raw amino-acid sequence, 275 residues long: Axin interactor, dorsalization-associated protein (275 aa).

The segment covering 97–107 (NLEFEEDEEEG) has biased composition (acidic residues). The segment at 97-125 (NLEFEEDEEEGGAGAGSPDSFPARVPGTL) is disordered. Position 113 is a phosphoserine (serine 113). The tract at residues 123 to 190 (GTLLPRLPSE…RKEDTYVHFN (68 aa)) is axin-binding. One can recognise a C2 Aida-type domain in the interval 126-273 (LPRLPSEPGM…LYLHLHQTLH (148 aa)).

The protein belongs to the AIDA family. As to quaternary structure, interacts with AXIN1.

In terms of biological role, acts as a ventralizing factor during embryogenesis. Inhibits axin-mediated JNK activation by binding axin and disrupting axin homodimerization. This in turn antagonizes a Wnt/beta-catenin-independent dorsalization pathway activated by AXIN/JNK-signaling. In Macaca fascicularis (Crab-eating macaque), this protein is Axin interactor, dorsalization-associated protein (AIDA).